A 72-amino-acid chain; its full sequence is Translation initiation factor IF-1 (72 aa).

In terms of domain architecture, S1-like spans 1-72 (MAKEDNIEMQ…SKGRIVFRSR (72 aa)).

Belongs to the IF-1 family. Component of the 30S ribosomal translation pre-initiation complex which assembles on the 30S ribosome in the order IF-2 and IF-3, IF-1 and N-formylmethionyl-tRNA(fMet); mRNA recruitment can occur at any time during PIC assembly.

It is found in the cytoplasm. One of the essential components for the initiation of protein synthesis. Stabilizes the binding of IF-2 and IF-3 on the 30S subunit to which N-formylmethionyl-tRNA(fMet) subsequently binds. Helps modulate mRNA selection, yielding the 30S pre-initiation complex (PIC). Upon addition of the 50S ribosomal subunit IF-1, IF-2 and IF-3 are released leaving the mature 70S translation initiation complex. The polypeptide is Translation initiation factor IF-1 (Sodalis glossinidius (strain morsitans)).